We begin with the raw amino-acid sequence, 795 residues long: Phenylalanine--tRNA ligase beta subunit (795 aa).

Residues 39-148 form the tRNA-binding domain; that stretch reads AAEFNGVVIG…LDAPLGTDLR (110 aa). One can recognise a B5 domain in the interval 401 to 476; that stretch reads PKPAQILLRR…RIYGYNNIPN (76 aa). Mg(2+) contacts are provided by Asp454, Asp460, Glu463, and Glu464. The FDX-ACB domain maps to 701 to 794; the sequence is SKFPANRRDI…LKTEFNASLR (94 aa).

The protein belongs to the phenylalanyl-tRNA synthetase beta subunit family. Type 1 subfamily. In terms of assembly, tetramer of two alpha and two beta subunits. It depends on Mg(2+) as a cofactor.

It is found in the cytoplasm. The catalysed reaction is tRNA(Phe) + L-phenylalanine + ATP = L-phenylalanyl-tRNA(Phe) + AMP + diphosphate + H(+). In Shewanella oneidensis (strain ATCC 700550 / JCM 31522 / CIP 106686 / LMG 19005 / NCIMB 14063 / MR-1), this protein is Phenylalanine--tRNA ligase beta subunit.